A 458-amino-acid polypeptide reads, in one-letter code: ATP-dependent protease ATPase subunit HslU (458 aa).

ATP is bound by residues Val-18, 60 to 65, Asp-270, Glu-335, and Arg-407; that span reads GVGKTE.

Belongs to the ClpX chaperone family. HslU subfamily. A double ring-shaped homohexamer of HslV is capped on each side by a ring-shaped HslU homohexamer. The assembly of the HslU/HslV complex is dependent on binding of ATP.

The protein localises to the cytoplasm. Functionally, ATPase subunit of a proteasome-like degradation complex; this subunit has chaperone activity. The binding of ATP and its subsequent hydrolysis by HslU are essential for unfolding of protein substrates subsequently hydrolyzed by HslV. HslU recognizes the N-terminal part of its protein substrates and unfolds these before they are guided to HslV for hydrolysis. The polypeptide is ATP-dependent protease ATPase subunit HslU (Desulfitobacterium hafniense (strain DSM 10664 / DCB-2)).